Reading from the N-terminus, the 128-residue chain is Sulfurtransferase TusD (128 aa).

Cys78 functions as the Cysteine persulfide intermediate in the catalytic mechanism.

The protein belongs to the DsrE/TusD family. In terms of assembly, heterohexamer, formed by a dimer of trimers. The hexameric TusBCD complex contains 2 copies each of TusB, TusC and TusD. The TusBCD complex interacts with TusE.

The protein resides in the cytoplasm. In terms of biological role, part of a sulfur-relay system required for 2-thiolation of 5-methylaminomethyl-2-thiouridine (mnm(5)s(2)U) at tRNA wobble positions. Accepts sulfur from TusA and transfers it in turn to TusE. This chain is Sulfurtransferase TusD, found in Shigella flexneri serotype 5b (strain 8401).